Consider the following 178-residue polypeptide: Putative metal-dependent hydrolase GK0616 (178 aa).

Residues His-68, His-161, and His-165 each coordinate Zn(2+).

This sequence belongs to the metal hydrolase YfiT family. In terms of assembly, homodimer. Zn(2+) is required as a cofactor.

The protein resides in the cytoplasm. In terms of biological role, possible metal-dependent hydrolase. The sequence is that of Putative metal-dependent hydrolase GK0616 from Geobacillus kaustophilus (strain HTA426).